The primary structure comprises 135 residues: Small ribosomal subunit protein uS12 (135 aa).

The segment at Met-1–Lys-20 is disordered. A compositionally biased stretch (basic residues) spans Arg-9–Lys-18.

It belongs to the universal ribosomal protein uS12 family. Part of the 30S ribosomal subunit. Contacts proteins S8 and S17. May interact with IF1 in the 30S initiation complex.

Its function is as follows. With S4 and S5 plays an important role in translational accuracy. In terms of biological role, interacts with and stabilizes bases of the 16S rRNA that are involved in tRNA selection in the A site and with the mRNA backbone. Located at the interface of the 30S and 50S subunits, it traverses the body of the 30S subunit contacting proteins on the other side and probably holding the rRNA structure together. The combined cluster of proteins S8, S12 and S17 appears to hold together the shoulder and platform of the 30S subunit. The chain is Small ribosomal subunit protein uS12 from Lactobacillus acidophilus (strain ATCC 700396 / NCK56 / N2 / NCFM).